Consider the following 500-residue polypeptide: Glycerol kinase (500 aa).

Threonine 13 serves as a coordination point for ADP. ATP contacts are provided by threonine 13, threonine 14, and serine 15. Sn-glycerol 3-phosphate is bound at residue threonine 13. Arginine 17 serves as a coordination point for ADP. The sn-glycerol 3-phosphate site is built by arginine 83, glutamate 84, tyrosine 136, and aspartate 246. The glycerol site is built by arginine 83, glutamate 84, tyrosine 136, aspartate 246, and glutamine 247. Threonine 268 and glycine 311 together coordinate ADP. Residues threonine 268, glycine 311, glutamine 315, and glycine 412 each contribute to the ATP site. Glycine 412 and asparagine 416 together coordinate ADP.

Belongs to the FGGY kinase family.

The enzyme catalyses glycerol + ATP = sn-glycerol 3-phosphate + ADP + H(+). The protein operates within polyol metabolism; glycerol degradation via glycerol kinase pathway; sn-glycerol 3-phosphate from glycerol: step 1/1. Its activity is regulated as follows. Inhibited by fructose 1,6-bisphosphate (FBP). Key enzyme in the regulation of glycerol uptake and metabolism. Catalyzes the phosphorylation of glycerol to yield sn-glycerol 3-phosphate. This chain is Glycerol kinase, found in Francisella tularensis subsp. novicida (strain U112).